The sequence spans 352 residues: Neutral protease 2 homolog ATEG_04941 (352 aa).

Positions 1-19 are cleaved as a signal peptide; it reads MRFTALATAILPLACNVLA. A propeptide spanning residues 20–175 is cleaved from the precursor; sequence LPAKTGEAPK…ASAVKPLDKR (156 aa). Cystine bridges form between cysteine 181/cysteine 253 and cysteine 260/cysteine 278. Position 303 (histidine 303) interacts with Zn(2+). Residue glutamate 304 is part of the active site. Zn(2+)-binding residues include histidine 307 and aspartate 318.

This sequence belongs to the peptidase M35 family. Zn(2+) is required as a cofactor.

It is found in the secreted. It carries out the reaction Preferential cleavage of bonds with hydrophobic residues in P1'. Also 3-Asn-|-Gln-4 and 8-Gly-|-Ser-9 bonds in insulin B chain.. Secreted metalloproteinase that allows assimilation of proteinaceous substrates. Shows high activities on basic nuclear substrates such as histone and protamine. The sequence is that of Neutral protease 2 homolog ATEG_04941 from Aspergillus terreus (strain NIH 2624 / FGSC A1156).